A 934-amino-acid polypeptide reads, in one-letter code: Bifunctional uridylyltransferase/uridylyl-removing enzyme (934 aa).

The uridylyltransferase stretch occupies residues 1–379; sequence MSAHDLKLEE…TFSRRKRKLS (379 aa). Residues 380–736 form a uridylyl-removing region; it reads ADGDFVSENH…AKPHTFEAVT (357 aa). The region spanning 496–613 is the HD domain; sequence VDEHLLRCIA…IDFADTVQTM (118 aa). ACT domains lie at 737–819 and 848–931; these read EITV…VLAK and VIEV…RSSQ.

This sequence belongs to the GlnD family. Requires Mg(2+) as cofactor.

The catalysed reaction is [protein-PII]-L-tyrosine + UTP = [protein-PII]-uridylyl-L-tyrosine + diphosphate. It carries out the reaction [protein-PII]-uridylyl-L-tyrosine + H2O = [protein-PII]-L-tyrosine + UMP + H(+). Its activity is regulated as follows. Uridylyltransferase (UTase) activity is inhibited by glutamine, while glutamine activates uridylyl-removing (UR) activity. Functionally, modifies, by uridylylation and deuridylylation, the PII regulatory proteins (GlnB and homologs), in response to the nitrogen status of the cell that GlnD senses through the glutamine level. Under low glutamine levels, catalyzes the conversion of the PII proteins and UTP to PII-UMP and PPi, while under higher glutamine levels, GlnD hydrolyzes PII-UMP to PII and UMP (deuridylylation). Thus, controls uridylylation state and activity of the PII proteins, and plays an important role in the regulation of nitrogen assimilation and metabolism. In Brucella anthropi (strain ATCC 49188 / DSM 6882 / CCUG 24695 / JCM 21032 / LMG 3331 / NBRC 15819 / NCTC 12168 / Alc 37) (Ochrobactrum anthropi), this protein is Bifunctional uridylyltransferase/uridylyl-removing enzyme.